The primary structure comprises 239 residues: uncharacterized protein (239 aa).

A signal peptide spans 1 to 19; that stretch reads MPLLHRTIIFLQLLGTISS. N-linked (GlcNAc...) asparagine glycosylation is found at Asn-44, Asn-58, Asn-72, Asn-92, Asn-109, Asn-136, Asn-172, Asn-192, and Asn-213.

The protein localises to the secreted. This is an uncharacterized protein from Caenorhabditis elegans.